The sequence spans 145 residues: Class I hydrophobin 1 (145 aa).

An N-terminal signal peptide occupies residues 1–19 (MKFSYAIAAVVAAAASVQA). Intrachain disulfides connect cysteine 65–cysteine 126, cysteine 72–cysteine 120, cysteine 73–cysteine 106, and cysteine 127–cysteine 140. N-linked (GlcNAc...) asparagine glycosylation is found at asparagine 80 and asparagine 129.

This sequence belongs to the fungal hydrophobin family. In terms of assembly, self-assembles to form functional amyloid fibrils called rodlets. Self-assembly into fibrillar rodlets occurs spontaneously at hydrophobic:hydrophilic interfaces and the rodlets further associate laterally to form amphipathic monolayers.

It localises to the secreted. Its subcellular location is the cell wall. Aerial growth, conidiation, and dispersal of filamentous fungi in the environment rely upon a capability of their secreting small amphipathic proteins called hydrophobins (HPBs) with low sequence identity. Class I can self-assemble into an outermost layer of rodlet bundles on aerial cell surfaces, conferring cellular hydrophobicity that supports fungal growth, development and dispersal; whereas Class II form highly ordered films at water-air interfaces through intermolecular interactions but contribute nothing to the rodlet structure. Hyd1 is a class I hydrophobin that is crucial for the initiation of primordia formation. Plays also important roles in nitrogen regulation and resistance to abiotic stresses. This is Class I hydrophobin 1 from Ganoderma lucidum (Ling zhi medicinal fungus).